Reading from the N-terminus, the 673-residue chain is F420-dependent formate dehydrogenase subunit alpha (673 aa).

Residues 3–59 enclose the 4Fe-4S Mo/W bis-MGD-type domain; sequence FKIVNTICPYCGVGCGLGLVVKDGRVIGIHPNKRHPINEGKLCAKGNYCYQFIHSKD. Residues Cys10, Cys13, Cys17, and Cys45 each contribute to the [4Fe-4S] cluster site. Sec131 is a non-standard amino acid (selenocysteine).

The protein belongs to the prokaryotic molybdopterin-containing oxidoreductase family. As to quaternary structure, dimer of an alpha (FdhA) and a beta (FdhB) subunit. It depends on [4Fe-4S] cluster as a cofactor. Requires Mo-bis(molybdopterin guanine dinucleotide) as cofactor. Zn(2+) serves as cofactor.

The catalysed reaction is oxidized coenzyme F420-(gamma-L-Glu)(n) + formate + 2 H(+) = reduced coenzyme F420-(gamma-L-Glu)(n) + CO2. Catalyzes the oxidation of formate to carbon dioxide, with coenzyme F420 as the electron acceptor. The polypeptide is F420-dependent formate dehydrogenase subunit alpha (fdhA) (Methanocaldococcus jannaschii (strain ATCC 43067 / DSM 2661 / JAL-1 / JCM 10045 / NBRC 100440) (Methanococcus jannaschii)).